The chain runs to 827 residues: Periplasmic nitrate reductase (827 aa).

The segment at residues 1–32 (MNLSRRDFMKANAALAAASVAGLIIPVKNVNA) is a signal peptide (tat-type signal). The region spanning 37 to 93 (ITWDKAVCRFCGTGCAVLVGTKDGRVVASQGDPDAEVNRGLNCIKGYFLPKIMYGKD) is the 4Fe-4S Mo/W bis-MGD-type domain. The [4Fe-4S] cluster site is built by C44, C47, C51, and C79. Mo-bis(molybdopterin guanine dinucleotide)-binding positions include K81, Q148, N173, C177, 210–217 (WGSNMAEM), 242–246 (STFEH), 261–263 (QSD), M372, Q376, N482, 508–509 (SD), K531, D558, and 717–726 (TGRILEHWHT). Position 793 (F793) interacts with substrate. Mo-bis(molybdopterin guanine dinucleotide) contacts are provided by N801 and K818.

It belongs to the prokaryotic molybdopterin-containing oxidoreductase family. NasA/NapA/NarB subfamily. Component of the periplasmic nitrate reductase NapAB complex composed of NapA and NapB. It depends on [4Fe-4S] cluster as a cofactor. The cofactor is Mo-bis(molybdopterin guanine dinucleotide). In terms of processing, predicted to be exported by the Tat system. The position of the signal peptide cleavage has not been experimentally proven.

It localises to the periplasm. It catalyses the reaction 2 Fe(II)-[cytochrome] + nitrate + 2 H(+) = 2 Fe(III)-[cytochrome] + nitrite + H2O. Catalytic subunit of the periplasmic nitrate reductase complex NapAB. Receives electrons from NapB and catalyzes the reduction of nitrate to nitrite. This chain is Periplasmic nitrate reductase, found in Histophilus somni (strain 129Pt) (Haemophilus somnus).